The following is a 167-amino-acid chain: Large ribosomal subunit protein uL10 (167 aa).

This sequence belongs to the universal ribosomal protein uL10 family. As to quaternary structure, part of the ribosomal stalk of the 50S ribosomal subunit. The N-terminus interacts with L11 and the large rRNA to form the base of the stalk. The C-terminus forms an elongated spine to which L12 dimers bind in a sequential fashion forming a multimeric L10(L12)X complex.

Forms part of the ribosomal stalk, playing a central role in the interaction of the ribosome with GTP-bound translation factors. This chain is Large ribosomal subunit protein uL10, found in Streptococcus mutans serotype c (strain ATCC 700610 / UA159).